Reading from the N-terminus, the 210-residue chain is Putative odorant-binding protein A5 (210 aa).

Residues 1 to 19 (MKLPALHLLFLGFICLARS) form the signal peptide.

The protein belongs to the phosphatidylethanolamine-binding protein family. As to expression, cells at the bases of a few scattered sensilla on the posterior surface of the antenna.

Its subcellular location is the secreted. The chain is Putative odorant-binding protein A5 (a5) from Drosophila melanogaster (Fruit fly).